Consider the following 513-residue polypeptide: Cytochrome P450 71D445 (513 aa).

The chain crosses the membrane as a helical; Signal-anchor for type II membrane protein span at residues 12–28; the sequence is SEWAITSTITLLFLILL. Cys-450 contributes to the heme binding site.

This sequence belongs to the cytochrome P450 family. The cofactor is heme. Expressed in mature seeds.

The protein localises to the membrane. The enzyme catalyses (-)-casbene + reduced [NADPH--hemoprotein reductase] + O2 = 8-hydroxycasbene + oxidized [NADPH--hemoprotein reductase] + H2O + H(+). It catalyses the reaction 4-hydroxycasbene + reduced [NADPH--hemoprotein reductase] + O2 = 4,8-dihydroxycasbene + oxidized [NADPH--hemoprotein reductase] + H2O + H(+). The catalysed reaction is 4,8-dihydroxycasbene + reduced [NADPH--hemoprotein reductase] + O2 = 4,5,8-trihydroxycasbene + oxidized [NADPH--hemoprotein reductase] + H2O + H(+). Its pathway is secondary metabolite biosynthesis; terpenoid biosynthesis. In terms of biological role, involved in the biosynthesis of macrocyclic lathyrane type diterpenoids (also called Euphorbia factors) natural products, including the cyclization route from casbene to jolkinol C, a precursor for ingenol mebutate that is used to treat actinic keratosis, a precancerous skin condition. Catalyzes the hydroxylation of (-)-casbene and 4-hydroxycasbene to produce 8-hydroxycasbene and 4,8-dihydroxycasbene, respectively. Also mediates the formation of 4-hydroxy-8-ketocasbene from 4,8-dihydroxycasbene. Together with ADH1, triggers the biosynthesis of 8-ketocasbene from 8-hydroxycasbene. This is Cytochrome P450 71D445 from Euphorbia lathyris (Caper spurge).